The primary structure comprises 157 residues: SsrA-binding protein (157 aa).

It belongs to the SmpB family.

Its subcellular location is the cytoplasm. Required for rescue of stalled ribosomes mediated by trans-translation. Binds to transfer-messenger RNA (tmRNA), required for stable association of tmRNA with ribosomes. tmRNA and SmpB together mimic tRNA shape, replacing the anticodon stem-loop with SmpB. tmRNA is encoded by the ssrA gene; the 2 termini fold to resemble tRNA(Ala) and it encodes a 'tag peptide', a short internal open reading frame. During trans-translation Ala-aminoacylated tmRNA acts like a tRNA, entering the A-site of stalled ribosomes, displacing the stalled mRNA. The ribosome then switches to translate the ORF on the tmRNA; the nascent peptide is terminated with the 'tag peptide' encoded by the tmRNA and targeted for degradation. The ribosome is freed to recommence translation, which seems to be the essential function of trans-translation. The chain is SsrA-binding protein from Elusimicrobium minutum (strain Pei191).